Here is a 304-residue protein sequence, read N- to C-terminus: GTPase Era (304 aa).

One can recognise an Era-type G domain in the interval 7–178 (KCGVVAVLGA…KNALAALMPE (172 aa)). Residues 15-22 (GAPNAGKS) form a G1 region. Residue 15–22 (GAPNAGKS) participates in GTP binding. The G2 stretch occupies residues 41-45 (QTTRA). A G3 region spans residues 66–69 (DTPG). Residues 66 to 70 (DTPGI) and 128 to 131 (NKVD) each bind GTP. The interval 128-131 (NKVD) is G4. A G5 region spans residues 157–159 (VSA). The KH type-2 domain maps to 209-286 (LHEELPYDSA…HLFLHVKVDE (78 aa)).

The protein belongs to the TRAFAC class TrmE-Era-EngA-EngB-Septin-like GTPase superfamily. Era GTPase family. In terms of assembly, monomer.

It is found in the cytoplasm. The protein resides in the cell inner membrane. An essential GTPase that binds both GDP and GTP, with rapid nucleotide exchange. Plays a role in 16S rRNA processing and 30S ribosomal subunit biogenesis and possibly also in cell cycle regulation and energy metabolism. This Erythrobacter litoralis (strain HTCC2594) protein is GTPase Era.